Reading from the N-terminus, the 300-residue chain is Tyrosine recombinase XerD (300 aa).

The Core-binding (CB) domain maps to 6 to 89 (LFHKRLIEQF…ALKVFFHFLK (84 aa)). The region spanning 108-293 (RLPSILSTEE…ASESLIEKFH (186 aa)) is the Tyr recombinase domain. Catalysis depends on residues arginine 152, lysine 174, histidine 245, arginine 248, and histidine 271. Tyrosine 280 functions as the O-(3'-phospho-DNA)-tyrosine intermediate in the catalytic mechanism.

The protein belongs to the 'phage' integrase family. XerD subfamily. In terms of assembly, forms a cyclic heterotetrameric complex composed of two molecules of XerC and two molecules of XerD.

It is found in the cytoplasm. Functionally, site-specific tyrosine recombinase, which acts by catalyzing the cutting and rejoining of the recombining DNA molecules. The XerC-XerD complex is essential to convert dimers of the bacterial chromosome into monomers to permit their segregation at cell division. It also contributes to the segregational stability of plasmids. This is Tyrosine recombinase XerD from Chlamydia trachomatis serovar D (strain ATCC VR-885 / DSM 19411 / UW-3/Cx).